Consider the following 428-residue polypeptide: Sporulation kinase C (428 aa).

Helical transmembrane passes span Ile-8–Ile-28 and Pro-36–Ile-56. Positions Leu-76 to Ser-147 constitute a PAS domain. The 53-residue stretch at Gly-148–Glu-200 folds into the PAC domain. In terms of domain architecture, Histidine kinase spans Gly-221–Ser-426. A Phosphohistidine; by autocatalysis modification is found at His-224.

Oligomerizes, probably forms homodimers; oligomerization is assisted by FloT. Interacts with FloT. Another study shows only rare colocalization with FloT or FloA membrane assemblies. KinC membrane assemblies are more mobile than FloT membrane assemblies.

The protein localises to the cell membrane. The protein resides in the membrane raft. The catalysed reaction is ATP + protein L-histidine = ADP + protein N-phospho-L-histidine.. Its function is as follows. Phosphorylates the sporulation-regulatory protein Spo0A a transcription factor that also controls biofilm formation. Requires FloT and FloA for localization to DRMs and for activity. This Bacillus subtilis (strain 168) protein is Sporulation kinase C.